We begin with the raw amino-acid sequence, 98 residues long: Small ribosomal subunit protein bS20 (98 aa).

Positions 1-12 (MAPRKPSKKVGP) are enriched in basic residues. Residues 1 to 31 (MAPRKPSKKVGPQKRPSAEKRVITSKKKQLR) form a disordered region.

Belongs to the bacterial ribosomal protein bS20 family.

Functionally, binds directly to 16S ribosomal RNA. The chain is Small ribosomal subunit protein bS20 from Chlamydia trachomatis serovar A (strain ATCC VR-571B / DSM 19440 / HAR-13).